Reading from the N-terminus, the 292-residue chain is Light-independent protochlorophyllide reductase iron-sulfur ATP-binding protein (292 aa).

ATP is bound by residues Gly-10–Thr-15 and Lys-39. Position 14 (Ser-14) interacts with Mg(2+). Residue Cys-95 coordinates [4Fe-4S] cluster. Asn-182–Arg-183 lines the ATP pocket.

Belongs to the NifH/BchL/ChlL family. In terms of assembly, homodimer. Protochlorophyllide reductase is composed of three subunits; ChlL, ChlN and ChlB. Requires [4Fe-4S] cluster as cofactor.

It is found in the plastid. It localises to the chloroplast. The enzyme catalyses chlorophyllide a + oxidized 2[4Fe-4S]-[ferredoxin] + 2 ADP + 2 phosphate = protochlorophyllide a + reduced 2[4Fe-4S]-[ferredoxin] + 2 ATP + 2 H2O. Its pathway is porphyrin-containing compound metabolism; chlorophyll biosynthesis (light-independent). In terms of biological role, component of the dark-operative protochlorophyllide reductase (DPOR) that uses Mg-ATP and reduced ferredoxin to reduce ring D of protochlorophyllide (Pchlide) to form chlorophyllide a (Chlide). This reaction is light-independent. The L component serves as a unique electron donor to the NB-component of the complex, and binds Mg-ATP. The sequence is that of Light-independent protochlorophyllide reductase iron-sulfur ATP-binding protein from Huperzia lucidula (Shining clubmoss).